Consider the following 245-residue polypeptide: MLYIFRLIITVIYSILVCVFGSIYCLFSPRNPKHVATFGHMFGRLAPLFGLKVECRKPTDAESYGNAIYIANHQNNYDMVTASNIVQPPTVTVGKKSLLWIPFFGQLYWLTGNLLIDRNNRTKAHGTIAEVVNHFKKRRISIWMFPEGTRSRGRGLLPFKTGAFHAAIAAGVPIIPVCVSTTSNKINLNRLHNGLVIVEMLPPIDVSQYGKDQVRELAAHCRSIMEQKIAELDKEVAEREAAGKV.

M1 carries the N-formylmethionine modification. The short motif at 73 to 78 (HQNNYD) is the HXXXXD motif element.

Belongs to the 1-acyl-sn-glycerol-3-phosphate acyltransferase family.

It localises to the cell inner membrane. The catalysed reaction is a 1-acyl-sn-glycero-3-phosphate + an acyl-CoA = a 1,2-diacyl-sn-glycero-3-phosphate + CoA. It catalyses the reaction a fatty acyl-[ACP] + a 1-acyl-sn-glycero-3-phosphate = a 1,2-diacyl-sn-glycero-3-phosphate + holo-[ACP]. The protein operates within phospholipid metabolism; CDP-diacylglycerol biosynthesis; CDP-diacylglycerol from sn-glycerol 3-phosphate: step 2/3. Its function is as follows. Converts lysophosphatidic acid (LPA) into phosphatidic acid by incorporating an acyl moiety at the 2 position. This enzyme can utilize either acyl-CoA or acyl-ACP as the fatty acyl donor. The sequence is that of 1-acyl-sn-glycerol-3-phosphate acyltransferase (plsC) from Escherichia coli (strain K12).